The chain runs to 433 residues: Enolase (433 aa).

A (2R)-2-phosphoglycerate-binding site is contributed by Gln163. Residue Glu205 is the Proton donor of the active site. Positions 241, 289, and 316 each coordinate Mg(2+). 4 residues coordinate (2R)-2-phosphoglycerate: Lys341, Arg370, Ser371, and Lys392. Lys341 acts as the Proton acceptor in catalysis.

This sequence belongs to the enolase family. Mg(2+) is required as a cofactor.

It is found in the cytoplasm. The protein localises to the secreted. It localises to the cell surface. It carries out the reaction (2R)-2-phosphoglycerate = phosphoenolpyruvate + H2O. Its pathway is carbohydrate degradation; glycolysis; pyruvate from D-glyceraldehyde 3-phosphate: step 4/5. In terms of biological role, catalyzes the reversible conversion of 2-phosphoglycerate (2-PG) into phosphoenolpyruvate (PEP). It is essential for the degradation of carbohydrates via glycolysis. The chain is Enolase from Treponema denticola (strain ATCC 35405 / DSM 14222 / CIP 103919 / JCM 8153 / KCTC 15104).